The primary structure comprises 154 residues: Transcription antitermination protein NusB (154 aa).

The protein belongs to the NusB family.

Its function is as follows. Involved in transcription antitermination. Required for transcription of ribosomal RNA (rRNA) genes. Binds specifically to the boxA antiterminator sequence of the ribosomal RNA (rrn) operons. The chain is Transcription antitermination protein NusB from Rickettsia typhi (strain ATCC VR-144 / Wilmington).